A 490-amino-acid polypeptide reads, in one-letter code: Probable cytosol aminopeptidase (490 aa).

Mn(2+) contacts are provided by Lys-262 and Asp-267. Lys-274 is an active-site residue. Residues Asp-285, Asp-344, and Glu-346 each contribute to the Mn(2+) site. Arg-348 is an active-site residue.

It belongs to the peptidase M17 family. Requires Mn(2+) as cofactor.

The protein localises to the cytoplasm. The enzyme catalyses Release of an N-terminal amino acid, Xaa-|-Yaa-, in which Xaa is preferably Leu, but may be other amino acids including Pro although not Arg or Lys, and Yaa may be Pro. Amino acid amides and methyl esters are also readily hydrolyzed, but rates on arylamides are exceedingly low.. It carries out the reaction Release of an N-terminal amino acid, preferentially leucine, but not glutamic or aspartic acids.. Its function is as follows. Presumably involved in the processing and regular turnover of intracellular proteins. Catalyzes the removal of unsubstituted N-terminal amino acids from various peptides. The protein is Probable cytosol aminopeptidase of Mannheimia succiniciproducens (strain KCTC 0769BP / MBEL55E).